Reading from the N-terminus, the 153-residue chain is Ribonuclease HI (153 aa).

Positions 1-141 constitute an RNase H type-1 domain; sequence MKSVNIFTDG…CDELAKLGAN (141 aa). Mg(2+)-binding residues include aspartate 9, glutamate 47, aspartate 69, and aspartate 133.

It belongs to the RNase H family. As to quaternary structure, monomer. Mg(2+) serves as cofactor.

Its subcellular location is the cytoplasm. It catalyses the reaction Endonucleolytic cleavage to 5'-phosphomonoester.. Endonuclease that specifically degrades the RNA of RNA-DNA hybrids. This chain is Ribonuclease HI, found in Haemophilus ducreyi (strain 35000HP / ATCC 700724).